A 373-amino-acid polypeptide reads, in one-letter code: Leucine aminopeptidase 1 (373 aa).

Positions 1 to 18 (MKLLSVLALSATATSVLG) are cleaved as a signal peptide. Asn-136 carries an N-linked (GlcNAc...) asparagine glycan. Zn(2+)-binding residues include His-176 and Asp-195. An N-linked (GlcNAc...) asparagine glycan is attached at Asn-196. Residues Glu-234 and Asp-261 each contribute to the Zn(2+) site. An N-linked (GlcNAc...) asparagine glycan is attached at Asn-284. The cysteines at positions 310 and 314 are disulfide-linked. His-343 serves as a coordination point for Zn(2+).

The protein belongs to the peptidase M28 family. M28E subfamily. Monomer. Zn(2+) is required as a cofactor.

Its subcellular location is the secreted. Its function is as follows. Extracellular aminopeptidase which contributes to pathogenicity. This is Leucine aminopeptidase 1 (LAP1) from Trichophyton equinum (Horse ringworm fungus).